The sequence spans 71 residues: MARITVEDCLKRIPNRFQLTLAATYRARQLTAGGTPQIELDPHDKDKPTVIALREVAAGKVGLEMLNRGQA.

The protein belongs to the RNA polymerase subunit omega family. In terms of assembly, the RNAP catalytic core consists of 2 alpha, 1 beta, 1 beta' and 1 omega subunit. When a sigma factor is associated with the core the holoenzyme is formed, which can initiate transcription.

It carries out the reaction RNA(n) + a ribonucleoside 5'-triphosphate = RNA(n+1) + diphosphate. Promotes RNA polymerase assembly. Latches the N- and C-terminal regions of the beta' subunit thereby facilitating its interaction with the beta and alpha subunits. The protein is DNA-directed RNA polymerase subunit omega of Azoarcus sp. (strain BH72).